The following is a 189-amino-acid chain: Probable DNA-directed RNA polymerase subunit delta (189 aa).

An HTH HARE-type domain is found at 14–81 (LSMIEVAHAI…GENVWALRTW (68 aa)). Acidic residues-rich tracts occupy residues 90–100 (EVDHPEDDGDE) and 118–189 (EGDD…EDEE). The disordered stretch occupies residues 90-189 (EVDHPEDDGD…DDLDDDEDEE (100 aa)).

This sequence belongs to the RpoE family. As to quaternary structure, RNAP is composed of a core of 2 alpha, a beta and a beta' subunits. The core is associated with a delta subunit and one of several sigma factors.

Functionally, participates in both the initiation and recycling phases of transcription. In the presence of the delta subunit, RNAP displays an increased specificity of transcription, a decreased affinity for nucleic acids, and an increased efficiency of RNA synthesis because of enhanced recycling. The chain is Probable DNA-directed RNA polymerase subunit delta from Lactobacillus delbrueckii subsp. bulgaricus (strain ATCC BAA-365 / Lb-18).